The following is an 89-amino-acid chain: Small ribosomal subunit protein uS14A (89 aa).

It belongs to the universal ribosomal protein uS14 family. As to quaternary structure, part of the 30S ribosomal subunit. Contacts proteins S3 and S10.

In terms of biological role, binds 16S rRNA, required for the assembly of 30S particles and may also be responsible for determining the conformation of the 16S rRNA at the A site. The sequence is that of Small ribosomal subunit protein uS14A from Staphylococcus aureus (strain MRSA252).